The chain runs to 346 residues: Phosphate acyltransferase (346 aa).

Belongs to the PlsX family. Homodimer. Probably interacts with PlsY.

Its subcellular location is the cytoplasm. The enzyme catalyses a fatty acyl-[ACP] + phosphate = an acyl phosphate + holo-[ACP]. It participates in lipid metabolism; phospholipid metabolism. Its function is as follows. Catalyzes the reversible formation of acyl-phosphate (acyl-PO(4)) from acyl-[acyl-carrier-protein] (acyl-ACP). This enzyme utilizes acyl-ACP as fatty acyl donor, but not acyl-CoA. This Deinococcus geothermalis (strain DSM 11300 / CIP 105573 / AG-3a) protein is Phosphate acyltransferase.